We begin with the raw amino-acid sequence, 175 residues long: uncharacterized protein (175 aa).

This is an uncharacterized protein from Bacillus subtilis (strain 168).